A 98-amino-acid polypeptide reads, in one-letter code: Prolactin-releasing peptide (98 aa).

A signal peptide spans 1-22; sequence MKAVGAWLLCLLLLGLALQGAA. Phenylalanine 53 is subject to Phenylalanine amide. The propeptide occupies 58 to 98; sequence AAPGDGPRPGPRRELACIPLEGGAEPSRALLGRLTAQLVQE.

As to expression, more abundantly expressed in the brainstem than the hypothalamus.

The protein resides in the secreted. Functionally, stimulates prolactin (PRL) release and regulates the expression of prolactin through its receptor GPR10. May stimulate lactotrophs directly to secrete PRL. This Ovis aries (Sheep) protein is Prolactin-releasing peptide (PRLH).